A 410-amino-acid chain; its full sequence is 2-oxoisovalerate dehydrogenase subunit alpha (410 aa).

This sequence belongs to the BCKDHA family. As to quaternary structure, heterodimer of an alpha and a beta chain. Thiamine diphosphate serves as cofactor.

The catalysed reaction is N(6)-[(R)-lipoyl]-L-lysyl-[protein] + 3-methyl-2-oxobutanoate + H(+) = N(6)-[(R)-S(8)-2-methylpropanoyldihydrolipoyl]-L-lysyl-[protein] + CO2. Functionally, the branched-chain alpha-keto dehydrogenase complex catalyzes the overall conversion of alpha-keto acids to acyl-CoA and CO(2). It contains multiple copies of three enzymatic components: branched-chain alpha-keto acid decarboxylase (E1), lipoamide acyltransferase (E2) and lipoamide dehydrogenase (E3). This chain is 2-oxoisovalerate dehydrogenase subunit alpha (bkdA1), found in Pseudomonas putida (Arthrobacter siderocapsulatus).